Here is a 56-residue protein sequence, read N- to C-terminus: Small ribosomal subunit protein bS21 (56 aa).

Belongs to the bacterial ribosomal protein bS21 family.

This is Small ribosomal subunit protein bS21 from Synechococcus sp. (strain WH7803).